A 245-amino-acid chain; its full sequence is Triosephosphate isomerase (245 aa).

Residue 4–6 (NWK) coordinates substrate. Residue histidine 91 is the Electrophile of the active site. Glutamate 161 (proton acceptor) is an active-site residue. Residues glycine 167, serine 207, and 228–229 (GG) each bind substrate.

The protein belongs to the triosephosphate isomerase family. Homodimer.

The protein resides in the cytoplasm. The enzyme catalyses D-glyceraldehyde 3-phosphate = dihydroxyacetone phosphate. The protein operates within carbohydrate biosynthesis; gluconeogenesis. It participates in carbohydrate degradation; glycolysis; D-glyceraldehyde 3-phosphate from glycerone phosphate: step 1/1. Its function is as follows. Involved in the gluconeogenesis. Catalyzes stereospecifically the conversion of dihydroxyacetone phosphate (DHAP) to D-glyceraldehyde-3-phosphate (G3P). The chain is Triosephosphate isomerase from Chlorobaculum tepidum (strain ATCC 49652 / DSM 12025 / NBRC 103806 / TLS) (Chlorobium tepidum).